A 241-amino-acid polypeptide reads, in one-letter code: GTP cyclohydrolase 1 (241 aa).

A propeptide spanning residues 1 to 11 is cleaved from the precursor; that stretch reads MEKPRGVRCTN. The disordered stretch occupies residues 1 to 58; sequence MEKPRGVRCTNGFPERELPRPGASRPAEKSRPPEAKGAQPADAWKAGRPRSEEDNELN. S51 and S72 each carry phosphoserine. Residues C132, H135, and C203 each contribute to the Zn(2+) site.

This sequence belongs to the GTP cyclohydrolase I family. In terms of assembly, toroid-shaped homodecamer, composed of two pentamers of five dimers. Interacts with AHSA1 and GCHFR/GFRP. Post-translationally, phosphorylated.

It is found in the cytoplasm. The protein localises to the nucleus. It catalyses the reaction GTP + H2O = 7,8-dihydroneopterin 3'-triphosphate + formate + H(+). It functions in the pathway cofactor biosynthesis; 7,8-dihydroneopterin triphosphate biosynthesis; 7,8-dihydroneopterin triphosphate from GTP: step 1/1. Its activity is regulated as follows. GTP shows a positive allosteric effect, and tetrahydrobiopterin inhibits the enzyme activity. Zinc is required for catalytic activity. Inhibited by Mg(2+). In terms of biological role, may positively regulate nitric oxide synthesis in endothelial cells. May be involved in dopamine synthesis. May modify pain sensitivity and persistence. The protein is GTP cyclohydrolase 1 (Gch1) of Rattus norvegicus (Rat).